A 63-amino-acid polypeptide reads, in one-letter code: MPKNKDESQKAIVRTYYIIEGDKIKLKNKKCPRCGSIMAHHMKPVERWACGKCGYTEFIGKGK.

Cysteine 31, cysteine 34, cysteine 50, and cysteine 53 together coordinate Zn(2+). The segment at 31-53 adopts a C4-type zinc-finger fold; it reads CPRCGSIMAHHMKPVERWACGKC.

It belongs to the eukaryotic ribosomal protein eS31 family. In terms of assembly, part of the 30S ribosomal subunit. It depends on Zn(2+) as a cofactor.

The chain is Small ribosomal subunit protein eS31 from Sulfurisphaera tokodaii (strain DSM 16993 / JCM 10545 / NBRC 100140 / 7) (Sulfolobus tokodaii).